We begin with the raw amino-acid sequence, 344 residues long: MNLRIGVIGTGAIGKEHINRITNKLSGAEITAVTDVNQEAAQQTVQDFNLNASVYPDDDSLLAAENVDAVLVTSWGPAHESSVLKAIQHGKHVFCEKPLATTAEGCMRIVEEEMKTGKRLVQVGFMRRYDSGYVQLKEAIDNRVVGEPLMIHCAHRNPTVASNYSTEMAVVDTLVHEIDVLHWLVNDDYESVQVIYPKKSKNALPHLKDPQMVIIETKGGIVINAEIYVNCKYGYDIQCEIVGEDGIIKLPEPSSISLRKEGKFSTDILMDWQRRFVAAYDVEIQDFIDSIRNKGEVSGPTAWDGYIAAVTTDACVKAQESGQKEPVALQEKPAFYQSFTTVNK.

The protein belongs to the Gfo/Idh/MocA family. Homotetramer.

It catalyses the reaction myo-inositol + NAD(+) = scyllo-inosose + NADH + H(+). The enzyme catalyses 1D-chiro-inositol + NAD(+) = scyllo-inosine + NADH + H(+). The protein operates within polyol metabolism; myo-inositol degradation into acetyl-CoA; acetyl-CoA from myo-inositol: step 1/7. In terms of biological role, involved in the oxidation of myo-inositol (MI) and D-chiro-inositol (DCI) to 2-keto-myo-inositol (2KMI or 2-inosose) and 1-keto-D-chiro-inositol (1KDCI), respectively. The protein is Inositol 2-dehydrogenase/D-chiro-inositol 3-dehydrogenase of Bacillus velezensis (strain DSM 23117 / BGSC 10A6 / LMG 26770 / FZB42) (Bacillus amyloliquefaciens subsp. plantarum).